Here is a 103-residue protein sequence, read N- to C-terminus: Glutaredoxin-C1 (103 aa).

Positions 1–102 constitute a Glutaredoxin domain; it reads MDRVNRLAAQ…PLLRNAGALW (102 aa). Residues cysteine 21 and cysteine 24 are joined by a disulfide bond.

Belongs to the glutaredoxin family. CC-type subfamily.

It is found in the cytoplasm. Functionally, has a glutathione-disulfide oxidoreductase activity in the presence of NADPH and glutathione reductase. Reduces low molecular weight disulfides and proteins. The chain is Glutaredoxin-C1 (GRXC1) from Oryza sativa subsp. japonica (Rice).